Here is a 423-residue protein sequence, read N- to C-terminus: Dihydrolipoyllysine-residue succinyltransferase component of 2-oxoglutarate dehydrogenase complex (423 aa).

One can recognise a Lipoyl-binding domain in the interval 1 to 76 (MPEVKVPELA…EVGQAIAVIG (76 aa)). Lys-42 is modified (N6-lipoyllysine). The segment at 76 to 185 (GEGSGNASKE…APAKEEKKYN (110 aa)) is disordered. The span at 80–96 (GNASKENSNDNTPQQND) shows a compositional bias: polar residues. Over residues 99–115 (TNNKKEETTNKSADKAE) the composition is skewed to basic and acidic residues. Positions 116 to 131 (VNQTNDDNQQRVNATP) are enriched in polar residues. The region spanning 128–164 (NATPSARRYARENGVNLAEVSPKTNDVVRKEDIDKKQ) is the Peripheral subunit-binding (PSBD) domain. The segment covering 153–164 (DVVRKEDIDKKQ) has biased composition (basic and acidic residues). Residues 165 to 177 (QAPASTQTTQQAP) show a composition bias toward low complexity. Catalysis depends on residues His-394 and Asp-398.

It belongs to the 2-oxoacid dehydrogenase family. As to quaternary structure, forms a 24-polypeptide structural core with octahedral symmetry. Part of the 2-oxoglutarate dehydrogenase (OGDH) complex composed of E1 (2-oxoglutarate dehydrogenase), E2 (dihydrolipoamide succinyltransferase) and E3 (dihydrolipoamide dehydrogenase); the complex contains multiple copies of the three enzymatic components (E1, E2 and E3). The cofactor is (R)-lipoate.

The catalysed reaction is N(6)-[(R)-dihydrolipoyl]-L-lysyl-[protein] + succinyl-CoA = N(6)-[(R)-S(8)-succinyldihydrolipoyl]-L-lysyl-[protein] + CoA. The protein operates within amino-acid degradation; L-lysine degradation via saccharopine pathway; glutaryl-CoA from L-lysine: step 6/6. Its function is as follows. E2 component of the 2-oxoglutarate dehydrogenase (OGDH) complex which catalyzes the second step in the conversion of 2-oxoglutarate to succinyl-CoA and CO(2). The sequence is that of Dihydrolipoyllysine-residue succinyltransferase component of 2-oxoglutarate dehydrogenase complex (odhB) from Staphylococcus aureus (strain MRSA252).